A 154-amino-acid polypeptide reads, in one-letter code: Aspartate carbamoyltransferase regulatory chain (154 aa).

Positions 109, 114, 138, and 141 each coordinate Zn(2+).

Belongs to the PyrI family. As to quaternary structure, contains catalytic and regulatory chains. It depends on Zn(2+) as a cofactor.

Its function is as follows. Involved in allosteric regulation of aspartate carbamoyltransferase. The protein is Aspartate carbamoyltransferase regulatory chain of Aeromonas salmonicida (strain A449).